A 125-amino-acid polypeptide reads, in one-letter code: MAFDKDAFLTALDSMTVLELNDLVKAIEEKFGVSAAAMAAPAGAGGGAAAAVAEEQTEFNVMLMDAGANKVSAIKAVREITGLGLKEAKDLVEAAPKAVKEGLSKADAEAAKKKLEDAGAKVELK.

It belongs to the bacterial ribosomal protein bL12 family. Homodimer. Part of the ribosomal stalk of the 50S ribosomal subunit. Forms a multimeric L10(L12)X complex, where L10 forms an elongated spine to which 2 to 4 L12 dimers bind in a sequential fashion. Binds GTP-bound translation factors.

In terms of biological role, forms part of the ribosomal stalk which helps the ribosome interact with GTP-bound translation factors. Is thus essential for accurate translation. The protein is Large ribosomal subunit protein bL12 of Variovorax paradoxus (strain S110).